Here is a 373-residue protein sequence, read N- to C-terminus: Saccharopine dehydrogenase [NAD(+), L-lysine-forming] (373 aa).

Residue Ala-2 is modified to N-acetylalanine; partial. L-saccharopine contacts are provided by Arg-18 and Lys-77. Lys-77 acts as the Proton acceptor in catalysis. The active-site Proton donor is His-96. L-saccharopine is bound at residue Gln-101. NAD(+) is bound at residue Arg-130. The L-saccharopine site is built by Arg-131 and Phe-135. Residues 203-204 (GR), Asp-227, Thr-231, Tyr-251, and Val-278 contribute to the NAD(+) site. Cys-205 and Cys-249 are joined by a disulfide. Residue 279–281 (SAD) participates in L-saccharopine binding. Residue 318–321 (IDHL) coordinates NAD(+). A Microbody targeting signal motif is present at residues 371–373 (SRL).

It belongs to the AlaDH/PNT family. In terms of assembly, monomer.

It localises to the peroxisome. The enzyme catalyses L-saccharopine + NAD(+) + H2O = L-lysine + 2-oxoglutarate + NADH + H(+). Its pathway is amino-acid biosynthesis; L-lysine biosynthesis via AAA pathway; L-lysine from L-alpha-aminoadipate (fungal route): step 3/3. Inhibited by p-chloromercuribenzoate and iodoacetate by modification of the active site cysteine residue. Inhibited by diethyl pyrocarbonate by modification of histidine residues. Inhibited by pyridoxal 5'-phosphate by modification of an essential lysine residue. Catalyzes the NAD(+)-dependent cleavage of saccharopine to L-lysine and 2-oxoglutarate, the final step in the alpha-aminoadipate (AAA) pathway for lysine biosynthesis. The chain is Saccharopine dehydrogenase [NAD(+), L-lysine-forming] from Saccharomyces cerevisiae (strain ATCC 204508 / S288c) (Baker's yeast).